The chain runs to 406 residues: MSKGYYSILFSQTTTNLGFSLYTMVVISFLFKMTNSTTIASMVTLISIIFRIFGSAILPLITIRLKLPLTIIISQLIQMLLLICLFYALLRTYSNQTLILVFIIISCISFFNGWFSPLKSAIIGEIISPDRRVKANGLLSTVDQTFQFVGWSLGGLIIAFLGEGYTIILTIFLLFTSLLSLLFCLPHGHANSVIREKNSPNKSIVSGWRYLFSQKKLRTIIIMDLIESWAGMIWIGSVSLAFVNEVLHKGESWWGFINGAYYLGSMIGGFIIYKLSERFQNKLINFMLIGAVSYGSLTLIYGFISNSYLALILVLFMGPAYILRDLTQETLIQNITTEQTRINIMSARSSLVQFIFMFSILAIGAISDFLGVRLVYVSAGILLLVSAIYGFSQLQFKKKVNKHISF.

10 helical membrane-spanning segments follow: residues 7 to 27 (SILF…MVVI), 43 to 63 (VTLI…LITI), 69 to 89 (LTII…FYAL), 98 to 118 (LILV…FSPL), 155 to 175 (GLII…FLLF), 220 to 240 (IIIM…SVSL), 253 to 273 (WWGF…FIIY), 297 to 317 (LTLI…VLFM), 352 to 372 (VQFI…FLGV), and 374 to 394 (LVYV…FSQL).

Belongs to the major facilitator superfamily.

It is found in the cell membrane. This is an uncharacterized protein from Bacillus subtilis (strain 168).